The chain runs to 365 residues: Chorismate synthase (365 aa).

A disordered region spans residues 41 to 61 (IQKELDRRRPGQSEVSTPRHE). Arg-48 contacts NADP(+). Residues 125–127 (RSS), Gly-285, 300–304 (KPTPS), and Arg-327 each bind FMN.

This sequence belongs to the chorismate synthase family. Requires FMNH2 as cofactor.

The enzyme catalyses 5-O-(1-carboxyvinyl)-3-phosphoshikimate = chorismate + phosphate. The protein operates within metabolic intermediate biosynthesis; chorismate biosynthesis; chorismate from D-erythrose 4-phosphate and phosphoenolpyruvate: step 7/7. Functionally, catalyzes the anti-1,4-elimination of the C-3 phosphate and the C-6 proR hydrogen from 5-enolpyruvylshikimate-3-phosphate (EPSP) to yield chorismate, which is the branch point compound that serves as the starting substrate for the three terminal pathways of aromatic amino acid biosynthesis. This reaction introduces a second double bond into the aromatic ring system. The chain is Chorismate synthase from Methanosarcina barkeri (strain Fusaro / DSM 804).